A 123-amino-acid chain; its full sequence is Large ribosomal subunit protein eL8 (123 aa).

The protein belongs to the eukaryotic ribosomal protein eL8 family. As to quaternary structure, part of the 50S ribosomal subunit. Probably part of the RNase P complex.

It is found in the cytoplasm. In terms of biological role, multifunctional RNA-binding protein that recognizes the K-turn motif in ribosomal RNA, the RNA component of RNase P, box H/ACA, box C/D and box C'/D' sRNAs. This is Large ribosomal subunit protein eL8 from Thermococcus gammatolerans (strain DSM 15229 / JCM 11827 / EJ3).